The chain runs to 146 residues: Hemoglobin subunit beta (146 aa).

Thr1 bears the Blocked amino end (Thr) mark. The Globin domain occupies 2 to 146; it reads HWTAEERHYI…VAHALTLQYH (145 aa). The heme b site is built by His63 and His92.

The protein belongs to the globin family. In terms of assembly, heterotetramer of two alpha chains and two beta chains. In terms of tissue distribution, red blood cells.

Functionally, involved in oxygen transport from the lung to the various peripheral tissues. The sequence is that of Hemoglobin subunit beta (HBB) from Caretta caretta (Loggerhead sea turtle).